The sequence spans 235 residues: tRNA (guanine-N(1)-)-methyltransferase (235 aa).

S-adenosyl-L-methionine is bound by residues Gly-112 and 132–137; that span reads LGDFVL.

Belongs to the RNA methyltransferase TrmD family. Homodimer.

It localises to the cytoplasm. It carries out the reaction guanosine(37) in tRNA + S-adenosyl-L-methionine = N(1)-methylguanosine(37) in tRNA + S-adenosyl-L-homocysteine + H(+). In terms of biological role, specifically methylates guanosine-37 in various tRNAs. This Acaryochloris marina (strain MBIC 11017) protein is tRNA (guanine-N(1)-)-methyltransferase.